Consider the following 154-residue polypeptide: MDRQLFENTEERPRTLHQLCEVVNKPLLELQLGCVFCKKALTASEVYNFAYTDLRVVYRDGYPYGVCKFCLLFYSKVRKLRYYNCSVYGASLEALTKKKLSDLSIRCYRCQHPLTPEEKQLHCDYKKRFHKISHMWTGSCLTCWRHTTATESAV.

Zinc fingers lie at residues 34 to 70 (CVFC…CKFC) and 107 to 143 (CYRC…CLTC).

Belongs to the papillomaviridae E6 protein family. Forms homodimers. Interacts with ubiquitin-protein ligase UBE3A/E6-AP; this interaction stimulates UBE3A ubiquitin activity. Interacts with host TP53 and EP300; this interaction inhibits TP53 activity.

The protein resides in the host cytoplasm. The protein localises to the host nucleus. Plays a major role in the induction and maintenance of cellular transformation. E6 associates with host UBE3A/E6-AP ubiquitin-protein ligase and modulates its activity. Sequesters tumor suppressor TP53 in the host cytoplasm and modulates its activity by interacting with host EP300 that results in the reduction of TP53 acetylation and activation. In turn, apoptosis induced by DNA damage is inhibited. E6 also protects host keratinocytes from apoptosis by mediating the degradation of host BAK1. May also inhibit host immune response. The polypeptide is Protein E6 (Human papillomavirus type 53).